Reading from the N-terminus, the 349-residue chain is Cobalt-precorrin-5B C(1)-methyltransferase (349 aa).

It belongs to the CbiD family.

The enzyme catalyses Co-precorrin-5B + S-adenosyl-L-methionine = Co-precorrin-6A + S-adenosyl-L-homocysteine. It participates in cofactor biosynthesis; adenosylcobalamin biosynthesis; cob(II)yrinate a,c-diamide from sirohydrochlorin (anaerobic route): step 6/10. In terms of biological role, catalyzes the methylation of C-1 in cobalt-precorrin-5B to form cobalt-precorrin-6A. This chain is Cobalt-precorrin-5B C(1)-methyltransferase, found in Saccharolobus islandicus (strain Y.N.15.51 / Yellowstone #2) (Sulfolobus islandicus).